The primary structure comprises 448 residues: Probable ribonuclease FAU-1 (448 aa).

Belongs to the FAU-1 family.

Functionally, probable RNase involved in rRNA stability through maturation and/or degradation of precursor rRNAs. Binds to RNA in loop regions with AU-rich sequences. The chain is Probable ribonuclease FAU-1 from Pyrobaculum calidifontis (strain DSM 21063 / JCM 11548 / VA1).